The chain runs to 297 residues: HTH-type transcriptional regulator ArgP (297 aa).

The HTH lysR-type domain occupies 4-60 (PDYRTLQALDAVIRERGFERAAQKLCITQSAVSQRIKQLENMFGQPLLVRTVPPRPT). A DNA-binding region (H-T-H motif) is located at residues 21–40 (FERAAQKLCITQSAVSQRIK).

It belongs to the LysR transcriptional regulatory family. As to quaternary structure, homodimer.

In terms of biological role, controls the transcription of genes involved in arginine and lysine metabolism. This is HTH-type transcriptional regulator ArgP from Salmonella arizonae (strain ATCC BAA-731 / CDC346-86 / RSK2980).